Reading from the N-terminus, the 102-residue chain is MSDQATTLKIKPLGDRILVKREEEASTARGGIILPDTAKKKQDRAEVLALGTGKKDDKGQQLPFEVQVGDIVLIDKYSGQELTVEGEEYVIVQMSEVIAVLQ.

It belongs to the GroES chaperonin family. In terms of assembly, heptamer of 7 subunits arranged in a ring. Interacts with the chaperonin GroEL.

It is found in the cytoplasm. Its function is as follows. Together with the chaperonin GroEL, plays an essential role in assisting protein folding. The GroEL-GroES system forms a nano-cage that allows encapsulation of the non-native substrate proteins and provides a physical environment optimized to promote and accelerate protein folding. GroES binds to the apical surface of the GroEL ring, thereby capping the opening of the GroEL channel. The sequence is that of Co-chaperonin GroES from Chlamydia muridarum (strain MoPn / Nigg).